The primary structure comprises 395 residues: Immunity-related GTPase family M protein 2 (395 aa).

One can recognise an IRG-type G domain in the interval 63 to 239 (NKIKIAVTGD…PKLRETLQKD (177 aa)). Residues 72–79 (DSGNGMSS), 97–101 (TGVVR), and 179–181 (KLD) each bind GTP.

It belongs to the TRAFAC class dynamin-like GTPase superfamily. IRG family. Post-translationally, ubiquitinated; polyubiquitinated in the cytosol, promoting Gbp1 recruitment to the T.gondii parasitophorous vacuole membranes.

The protein localises to the cytoplasmic vesicle membrane. Its subcellular location is the golgi apparatus membrane. It is found in the cytoplasm. The protein resides in the cytosol. It catalyses the reaction GTP + H2O = GDP + phosphate + H(+). Its function is as follows. Immunity-related GTPase that plays important roles in innate immunity and inflammatory response. Acts as a dynamin-like protein that binds to intracellular membranes and promotes remodeling and trafficking of those membranes. Required for clearance of acute protozoan and bacterial infections. Acts by participating to Tgtp1/Irgb6 and Gbp1-mediated parasite killing by promoting their accumulation on the T.gondii parasitophorous vacuole membranes. Also required for prolonged loading of ubiquitin and p62/Sqstm1 to parasitophorous vacuole membranes. Also acts as a key negative regulator of the inflammatory response by inhibiting the non-canonical inflammasome, thereby protecting against Casp11-driven septic shock during endotoxemia. The polypeptide is Immunity-related GTPase family M protein 2 (Mus musculus (Mouse)).